A 541-amino-acid chain; its full sequence is Putative acyl-CoA dehydrogenase AidB (541 aa).

Residues 182 to 191 (MGMTEKQGGS), T185, S191, 216 to 218 (FFS), S218, 423 to 433 (IWEGSGNIMCL), and N429 each bind FAD. Residues 445-541 (VYDLLSEAFV…LLRATGGVCV (97 aa)) are dsDNA-binding.

Belongs to the acyl-CoA dehydrogenase family. As to quaternary structure, homotetramer. Dimer of dimers. FAD serves as cofactor.

Its subcellular location is the cytoplasm. Functionally, part of the adaptive DNA-repair response to alkylating agents. Could prevent alkylation damage by protecting DNA and destroying alkylating agents that have yet to reach their DNA target. Binds to double-stranded DNA with a preference for a DNA region that includes its own promoter. Shows weak isovaleryl-CoA dehydrogenase activity in vitro. In Escherichia coli (strain K12), this protein is Putative acyl-CoA dehydrogenase AidB (aidB).